The chain runs to 972 residues: Hemoglobin and hemoglobin-haptoglobin-binding protein (972 aa).

Residues 1 to 22 (MKANKLSAITLCILGYAHTVYA) form the signal peptide. The short motif at 32 to 39 (ETIVVSSE) is the TonB box element. Residues 38 to 167 (SEDDSVHNKN…LGGTVSFESK (130 aa)) form the TBDR plug domain. The region spanning 175–972 (DKNYHFGYKT…NFRVNAEITF (798 aa)) is the TBDR beta-barrel domain. A TonB C-terminal box motif is present at residues 955–972 (KRFNAPGRNFRVNAEITF).

The protein belongs to the TonB-dependent receptor family. Hemoglobin/haptoglobin binding protein subfamily.

The protein localises to the cell outer membrane. In terms of biological role, acts as a receptor for hemoglobin or the hemoglobin/haptoglobin complex of the host and is required for heme uptake. May be involved in virulence. The chain is Hemoglobin and hemoglobin-haptoglobin-binding protein from Haemophilus ducreyi (strain 35000HP / ATCC 700724).